The chain runs to 104 residues: uncharacterized protein (104 aa).

This is an uncharacterized protein from Treponema pallidum (strain Nichols).